A 965-amino-acid polypeptide reads, in one-letter code: Phosphatidylethanolamine N-methyltransferase (965 aa).

The Lumenal portion of the chain corresponds to 1–82; the sequence is MDRGLSTGTN…SPSEPKNLSD (82 aa). The disordered stretch occupies residues 34–54; it reads PTVTNASNGKDKAGKTFGRTP. Residues 83-103 traverse the membrane as a helical segment; it reads LVVLTILAGHIFLLWILPSGA. Over 104-106 the chain is Cytoplasmic; it reads KIP. A helical transmembrane segment spans residues 107-127; sequence VFAVIYLFWRSCYNAGIGWLL. The Lumenal segment spans residues 128 to 192; sequence HNQSHHKTLV…EYNTWLVFRR (65 aa). Residues 193–213 form a helical membrane-spanning segment; it reads LVDLILMCDFASYCLFAIACS. Over 214-220 the chain is Cytoplasmic; it reads RHPANES. The chain crosses the membrane as a helical span at residues 221–241; sequence VLMTVIRWTSGIALVLFNLWV. Residues 242-274 lie on the Lumenal side of the membrane; that stretch reads KLDAHRVVKDYAWYWGDFFYLIDQELTFDGVFE. Residues 275–295 traverse the membrane as a helical segment; sequence MAPHPMYSVGYAGYYGISLMA. The Cytoplasmic portion of the chain corresponds to 296–297; the sequence is AS. Residues 298-318 form a helical membrane-spanning segment; it reads YKVLFISIIAHAAQFAFLVLV. The Lumenal segment spans residues 319 to 394; the sequence is ENPHIDKTYN…LDLHRITDTS (76 aa). Residues 326–368 form a disordered region; it reads TYNPPPPRKRTITEHDAASQRSQSPDTPNAPSVSEENVPNATT. The segment covering 344–368 has biased composition (polar residues); the sequence is SQRSQSPDTPNAPSVSEENVPNATT. The chain crosses the membrane as a helical span at residues 395-415; the sequence is SILVQFLMFSLTVLTPSTPWY. Gln-416 is a topological domain (cytoplasmic). A helical transmembrane segment spans residues 417 to 437; the sequence is FLFVANAAIWRLWYSVGIGYL. The Lumenal segment spans residues 438 to 470; it reads LNRQSNCKSWTRHFVKYGETPHEAWNQWKGTYH. The chain crosses the membrane as a helical span at residues 471–491; it reads LSMVMCYASFISAVWKMYTLP. The Cytoplasmic portion of the chain corresponds to 492 to 503; it reads SNWGYGLAILRH. The chain crosses the membrane as a helical span at residues 504 to 524; the sequence is VLGAGLISLQIWTSVSIYESL. Topologically, residues 525–559 are lumenal; that stretch reads GEFGWFYGDFFFDESPKLTYNGIYRFLNNPERVLG. Residues 560-580 form a helical membrane-spanning segment; that stretch reads LAGVWGAVLITASGTVAFLAF. The Cytoplasmic segment spans residues 581-965; the sequence is LSHILSLGFI…GATTPTESKE (385 aa).

The protein belongs to the class VI-like SAM-binding methyltransferase superfamily. CHO2 family.

It is found in the endoplasmic reticulum membrane. The enzyme catalyses a 1,2-diacyl-sn-glycero-3-phosphoethanolamine + S-adenosyl-L-methionine = a 1,2-diacyl-sn-glycero-3-phospho-N-methylethanolamine + S-adenosyl-L-homocysteine + H(+). It functions in the pathway phospholipid metabolism; phosphatidylcholine biosynthesis. Functionally, catalyzes the first step of the methylation pathway of phosphatidylcholine biosynthesis, the SAM-dependent methylation of phosphatidylethanolamine (PE) to phosphatidylmonomethylethanolamine (PMME). The polypeptide is Phosphatidylethanolamine N-methyltransferase (Emericella nidulans (strain FGSC A4 / ATCC 38163 / CBS 112.46 / NRRL 194 / M139) (Aspergillus nidulans)).